We begin with the raw amino-acid sequence, 515 residues long: Cytidine and dCMP deaminase domain-containing protein 1 (515 aa).

2 stretches are compositionally biased toward polar residues: residues 1-11 (MKEAGQMQNLE) and 18-27 (SVSTQTGSMT). 2 disordered regions span residues 1–27 (MKEA…GSMT) and 56–83 (RQKS…STDK). Residues 60–83 (QKNEEGKHGPLGDNEEMTRVSTDK) are compositionally biased toward basic and acidic residues. Positions 71–169 (GDNEEMTRVS…SLLTEASSSE (99 aa)) constitute a CMP/dCMP-type deaminase 1 domain. Zn(2+) is bound by residues histidine 110, cysteine 135, and cysteine 138. A Nuclear export signal motif is present at residues 272–284 (NLRQNMKDLILLL). In terms of domain architecture, CMP/dCMP-type deaminase 2 spans 318 to 483 (EIARHCMVQA…LNPSGAYGLE (166 aa)). Histidine 399 is a Zn(2+) binding site. Glutamate 401 (proton donor) is an active-site residue. Zn(2+)-binding residues include cysteine 427 and cysteine 430. The Bipartite nuclear localization signal motif lies at 489-511 (RRENGVLRPVPQKEEQHQDKKLC). The disordered stretch occupies residues 494-515 (VLRPVPQKEEQHQDKKLCLGIH).

Belongs to the cytidine and deoxycytidylate deaminase family. Zn(2+) is required as a cofactor.

The protein localises to the cytoplasm. The protein resides in the nucleus. The catalysed reaction is 2'-deoxycytidine + H2O + H(+) = 2'-deoxyuridine + NH4(+). The enzyme catalyses cytidine + H2O + H(+) = uridine + NH4(+). In terms of biological role, catalyzes the deamination of cytidine and deoxycytidine into uridine and deoxyuridine, respectively. May play an important role in testicular development and spermatogenesis. The chain is Cytidine and dCMP deaminase domain-containing protein 1 (CDADC1) from Pongo abelii (Sumatran orangutan).